A 390-amino-acid polypeptide reads, in one-letter code: Glutamyl-tRNA reductase (390 aa).

Residues 46-49, S96, 101-103, and Q107 contribute to the substrate site; these read TCNR and EAQ. C47 functions as the Nucleophile in the catalytic mechanism. 176-181 contributes to the NADP(+) binding site; sequence GAGEMA.

It belongs to the glutamyl-tRNA reductase family. As to quaternary structure, homodimer.

The catalysed reaction is (S)-4-amino-5-oxopentanoate + tRNA(Glu) + NADP(+) = L-glutamyl-tRNA(Glu) + NADPH + H(+). It participates in porphyrin-containing compound metabolism; protoporphyrin-IX biosynthesis; 5-aminolevulinate from L-glutamyl-tRNA(Glu): step 1/2. Catalyzes the NADPH-dependent reduction of glutamyl-tRNA(Glu) to glutamate 1-semialdehyde (GSA). The polypeptide is Glutamyl-tRNA reductase (Thermus thermophilus (strain ATCC BAA-163 / DSM 7039 / HB27)).